Reading from the N-terminus, the 420-residue chain is MVSRFFSWTNEKPLGDQRAHLPDSFLELEQEIAIREEGLSKLFQATTIWIDSILKKVDGEDKEKCLACENLGKVMINHSKELPQDSSYGITLSQLGKANLKIGEHQTSLAYKARVCYLDFLKRYLVQAKDFHSARKKLESRRQAYESLLQKSFKEKKEDSRLEEDIRLALYKFEESTEQVKNRMIALKDVEADQYQQLTELIVYELNFFKESTGILNTIFNSQNSLTPQKKIQSSERSVENEFLASPMDPSLSKLFTKTTNTEKISPTPFSTPKRKSKKETVFVKAIYSFTGRNEKELDLHTGDVIQVSEQLGPDWYMGEKVNSKAEKLGNSGMFPVNYCTRIYDLHVQKSHETRSLERARSIRRIVSDDPRDYCSPIKQSPIQNLKFLDSDNSLLSSQNVEASSQPIKIRKPLPEIPNK.

Residues 10–232 form the BAR domain; it reads NEKPLGDQRA…QNSLTPQKKI (223 aa). Residues 279 to 345 form the SH3 domain; the sequence is KETVFVKAIY…PVNYCTRIYD (67 aa). The segment at 398–420 is disordered; sequence SQNVEASSQPIKIRKPLPEIPNK.

It localises to the cytoplasm. It is found in the nucleus. Has a role in meiosis and sporulation. This Schizosaccharomyces pombe (strain 972 / ATCC 24843) (Fission yeast) protein is Meiotically up-regulated gene 137 protein (mug137).